Here is a 311-residue protein sequence, read N- to C-terminus: tRNA-cytidine(32) 2-sulfurtransferase (311 aa).

The short motif at 47–52 (SGGKDS) is the PP-loop motif element. [4Fe-4S] cluster-binding residues include Cys122, Cys125, and Cys213.

It belongs to the TtcA family. In terms of assembly, homodimer. The cofactor is Mg(2+). [4Fe-4S] cluster is required as a cofactor.

The protein localises to the cytoplasm. The enzyme catalyses cytidine(32) in tRNA + S-sulfanyl-L-cysteinyl-[cysteine desulfurase] + AH2 + ATP = 2-thiocytidine(32) in tRNA + L-cysteinyl-[cysteine desulfurase] + A + AMP + diphosphate + H(+). It functions in the pathway tRNA modification. Its function is as follows. Catalyzes the ATP-dependent 2-thiolation of cytidine in position 32 of tRNA, to form 2-thiocytidine (s(2)C32). The sulfur atoms are provided by the cysteine/cysteine desulfurase (IscS) system. In Escherichia coli (strain 55989 / EAEC), this protein is tRNA-cytidine(32) 2-sulfurtransferase.